The sequence spans 374 residues: Growth/differentiation factor 8 (374 aa).

A signal peptide spans 1–22 (MHFTQVLISLSVLIACGPVGYG). The propeptide occupies 23-265 (DITAHQQPST…ISEGPKRIRR (243 aa)). Asn-72 and Asn-274 each carry an N-linked (GlcNAc...) asparagine glycan. 4 disulfide bridges follow: Cys-271-Cys-281, Cys-280-Cys-339, Cys-308-Cys-371, and Cys-312-Cys-373.

Belongs to the TGF-beta family. As to quaternary structure, homodimer; disulfide-linked. Predominantly expressed in muscle. At hatching, expression is strongest in the skin epithelium, and is also found in the retina and brain. From day 28, expressed in skeletal muscle. In the adult, highest expression is seen in the gastrointestinal tract, brain, muscle, heart and testis. Also expressed in the adult pharynx, kidney, spleen, liver, gill, eyes, skin, swim bladder and ovary.

The protein localises to the secreted. Acts specifically as a negative regulator of skeletal muscle growth. May down-regulate muscle-specific transcription factors such as myod and myog. The protein is Growth/differentiation factor 8 (mstnb) of Danio rerio (Zebrafish).